The sequence spans 156 residues: MTSWLLLAEAGVPEGGLFDLDATLPLMAIQVVFLTFILNAIFFRPIGRTVEERENYVASSRADAKQKLAQVERLEANLTEQLRGARKQSQTVIAEAEEEVNRLYQEALRMAQAEANNIRESSRREIEIQKAAAIKSLQGDVDRLSNLIVDRLLASR.

A helical transmembrane segment spans residues 23–43 (TLPLMAIQVVFLTFILNAIFF).

This sequence belongs to the ATPase B chain family. In terms of assembly, F-type ATPases have 2 components, F(1) - the catalytic core - and F(0) - the membrane proton channel. F(1) has five subunits: alpha(3), beta(3), gamma(1), delta(1), epsilon(1). F(0) has four main subunits: a(1), b(1), b'(1) and c(10-14). The alpha and beta chains form an alternating ring which encloses part of the gamma chain. F(1) is attached to F(0) by a central stalk formed by the gamma and epsilon chains, while a peripheral stalk is formed by the delta, b and b' chains.

The protein resides in the plastid. The protein localises to the organellar chromatophore thylakoid membrane. F(1)F(0) ATP synthase produces ATP from ADP in the presence of a proton or sodium gradient. F-type ATPases consist of two structural domains, F(1) containing the extramembraneous catalytic core and F(0) containing the membrane proton channel, linked together by a central stalk and a peripheral stalk. During catalysis, ATP synthesis in the catalytic domain of F(1) is coupled via a rotary mechanism of the central stalk subunits to proton translocation. Functionally, component of the F(0) channel, it forms part of the peripheral stalk, linking F(1) to F(0). The b'-subunit is a diverged and duplicated form of b found in plants and photosynthetic bacteria. The polypeptide is ATP synthase subunit b', organellar chromatophore (Paulinella chromatophora).